The sequence spans 253 residues: 3-deoxy-manno-octulosonate cytidylyltransferase (253 aa).

The protein belongs to the KdsB family.

The protein localises to the cytoplasm. The enzyme catalyses 3-deoxy-alpha-D-manno-oct-2-ulosonate + CTP = CMP-3-deoxy-beta-D-manno-octulosonate + diphosphate. It participates in nucleotide-sugar biosynthesis; CMP-3-deoxy-D-manno-octulosonate biosynthesis; CMP-3-deoxy-D-manno-octulosonate from 3-deoxy-D-manno-octulosonate and CTP: step 1/1. The protein operates within bacterial outer membrane biogenesis; lipopolysaccharide biosynthesis. Activates KDO (a required 8-carbon sugar) for incorporation into bacterial lipopolysaccharide in Gram-negative bacteria. This chain is 3-deoxy-manno-octulosonate cytidylyltransferase, found in Pseudoalteromonas translucida (strain TAC 125).